Reading from the N-terminus, the 510-residue chain is MTSLIAQWLHITQDLNSALTRQARFDTLLTTIRDVLNCDSSALLLFEDQHFKPLAINGLAKEVLGRRFSIEQHPRLEAIARAGDIVRFPSESTLPDPYDGLITNHQGKLHVHSCIGLPLLIDDQLIGAITIDALDPNQFDQLKNQELRFISALAAGGLHTALLLEQLETQASLPRESYAEKRTLSNEIIGNSQGMRTLQDQIDAVANTELSVLVMGETGVGKELVANAIHHRSDRASNNLVYLNCAALPESVAESELFGHIKGAFTGAISHRKGKFEQADGGTLFLDEVGELSLELQAKLLRALQYGDIQRVGDDRHIRVNTRIVAATNRVLHEEVKAGRFRADLYHRLSVFPLHVPPLREREEDVILLAGFFAEQVRGKLGLHSVRLSPSLVAELREYHWPGNVRELEHVIKRAAVLAKARTPQMDIELISQDFDIKTPTSPMMPTVAASQAQHEIHSDIGLKQATDAFQKKLILRALESNQGNWAATARQLELDSGNLHRLAKRLGIK.

The 230-residue stretch at 188–417 (IIGNSQGMRT…LEHVIKRAAV (230 aa)) folds into the Sigma-54 factor interaction domain. Residues 216–223 (GETGVGKE) and 279–288 (ADGGTLFLDE) contribute to the ATP site. Positions 486 to 505 (WAATARQLELDSGNLHRLAK) form a DNA-binding region, H-T-H motif.

It participates in nitrogen metabolism; nitric oxide reduction. In terms of biological role, required for the expression of anaerobic nitric oxide (NO) reductase, acts as a transcriptional activator for at least the norVW operon. Activation also requires sigma-54. The polypeptide is Anaerobic nitric oxide reductase transcription regulator NorR (Vibrio vulnificus (strain CMCP6)).